The sequence spans 320 residues: Methionyl-tRNA formyltransferase (320 aa).

111 to 114 (SLLP) contributes to the (6S)-5,6,7,8-tetrahydrofolate binding site.

Belongs to the Fmt family.

It carries out the reaction L-methionyl-tRNA(fMet) + (6R)-10-formyltetrahydrofolate = N-formyl-L-methionyl-tRNA(fMet) + (6S)-5,6,7,8-tetrahydrofolate + H(+). Attaches a formyl group to the free amino group of methionyl-tRNA(fMet). The formyl group appears to play a dual role in the initiator identity of N-formylmethionyl-tRNA by promoting its recognition by IF2 and preventing the misappropriation of this tRNA by the elongation apparatus. The polypeptide is Methionyl-tRNA formyltransferase (Pediococcus pentosaceus (strain ATCC 25745 / CCUG 21536 / LMG 10740 / 183-1w)).